A 335-amino-acid polypeptide reads, in one-letter code: tRNA N6-adenosine threonylcarbamoyltransferase (335 aa).

Fe cation contacts are provided by His107 and His111. Substrate is bound by residues 129–133 (LVSGG), Asp162, Gly175, and Asn268. Residue Asp296 coordinates Fe cation.

Belongs to the KAE1 / TsaD family. The cofactor is Fe(2+).

It is found in the cytoplasm. It carries out the reaction L-threonylcarbamoyladenylate + adenosine(37) in tRNA = N(6)-L-threonylcarbamoyladenosine(37) in tRNA + AMP + H(+). Its function is as follows. Required for the formation of a threonylcarbamoyl group on adenosine at position 37 (t(6)A37) in tRNAs that read codons beginning with adenine. Is involved in the transfer of the threonylcarbamoyl moiety of threonylcarbamoyl-AMP (TC-AMP) to the N6 group of A37, together with TsaE and TsaB. TsaD likely plays a direct catalytic role in this reaction. This Campylobacter fetus subsp. fetus (strain 82-40) protein is tRNA N6-adenosine threonylcarbamoyltransferase.